The following is a 238-amino-acid chain: Ribonuclease PH (238 aa).

Phosphate-binding positions include Arg86 and 124–126 (GTR).

It belongs to the RNase PH family. Homohexameric ring arranged as a trimer of dimers.

The catalysed reaction is tRNA(n+1) + phosphate = tRNA(n) + a ribonucleoside 5'-diphosphate. Its function is as follows. Phosphorolytic 3'-5' exoribonuclease that plays an important role in tRNA 3'-end maturation. Removes nucleotide residues following the 3'-CCA terminus of tRNAs; can also add nucleotides to the ends of RNA molecules by using nucleoside diphosphates as substrates, but this may not be physiologically important. Probably plays a role in initiation of 16S rRNA degradation (leading to ribosome degradation) during starvation. The protein is Ribonuclease PH of Shigella boydii serotype 18 (strain CDC 3083-94 / BS512).